The chain runs to 333 residues: Glycerol-3-phosphate dehydrogenase [NAD(P)+] (333 aa).

5 residues coordinate NADPH: S10, W11, H31, R32, and K105. Sn-glycerol 3-phosphate is bound by residues K105, G136, and S138. NADPH is bound at residue A140. Positions 191, 244, 254, 255, and 256 each coordinate sn-glycerol 3-phosphate. The active-site Proton acceptor is the K191. NADPH is bound at residue R255. NADPH contacts are provided by I279 and E281.

It belongs to the NAD-dependent glycerol-3-phosphate dehydrogenase family.

The protein resides in the cytoplasm. The catalysed reaction is sn-glycerol 3-phosphate + NAD(+) = dihydroxyacetone phosphate + NADH + H(+). It catalyses the reaction sn-glycerol 3-phosphate + NADP(+) = dihydroxyacetone phosphate + NADPH + H(+). The protein operates within membrane lipid metabolism; glycerophospholipid metabolism. Its function is as follows. Catalyzes the reduction of the glycolytic intermediate dihydroxyacetone phosphate (DHAP) to sn-glycerol 3-phosphate (G3P), the key precursor for phospholipid synthesis. The polypeptide is Glycerol-3-phosphate dehydrogenase [NAD(P)+] (Pelodictyon phaeoclathratiforme (strain DSM 5477 / BU-1)).